Reading from the N-terminus, the 177-residue chain is Large ribosomal subunit protein uL6 (177 aa).

The protein belongs to the universal ribosomal protein uL6 family. In terms of assembly, part of the 50S ribosomal subunit.

Functionally, this protein binds to the 23S rRNA, and is important in its secondary structure. It is located near the subunit interface in the base of the L7/L12 stalk, and near the tRNA binding site of the peptidyltransferase center. In Psychrobacter arcticus (strain DSM 17307 / VKM B-2377 / 273-4), this protein is Large ribosomal subunit protein uL6.